The chain runs to 190 residues: Holliday junction branch migration complex subunit RuvA (190 aa).

Positions 1-64 (MIGRITGTLI…EDAQLLYGFG (64 aa)) are domain I. Positions 65–137 (SSAERSTFRE…MRGKLGADIG (73 aa)) are domain II. The flexible linker stretch occupies residues 137-141 (GATPH). The interval 142–190 (AASGHQSDILNALLALGYSDKESQAALKKLPDGVDVSEGIRLALKALVR) is domain III.

It belongs to the RuvA family. As to quaternary structure, homotetramer. Forms an RuvA(8)-RuvB(12)-Holliday junction (HJ) complex. HJ DNA is sandwiched between 2 RuvA tetramers; dsDNA enters through RuvA and exits via RuvB. An RuvB hexamer assembles on each DNA strand where it exits the tetramer. Each RuvB hexamer is contacted by two RuvA subunits (via domain III) on 2 adjacent RuvB subunits; this complex drives branch migration. In the full resolvosome a probable DNA-RuvA(4)-RuvB(12)-RuvC(2) complex forms which resolves the HJ.

It is found in the cytoplasm. Functionally, the RuvA-RuvB-RuvC complex processes Holliday junction (HJ) DNA during genetic recombination and DNA repair, while the RuvA-RuvB complex plays an important role in the rescue of blocked DNA replication forks via replication fork reversal (RFR). RuvA specifically binds to HJ cruciform DNA, conferring on it an open structure. The RuvB hexamer acts as an ATP-dependent pump, pulling dsDNA into and through the RuvAB complex. HJ branch migration allows RuvC to scan DNA until it finds its consensus sequence, where it cleaves and resolves the cruciform DNA. In Bordetella pertussis (strain Tohama I / ATCC BAA-589 / NCTC 13251), this protein is Holliday junction branch migration complex subunit RuvA.